Reading from the N-terminus, the 233-residue chain is Large ribosomal subunit protein uL1 (233 aa).

Belongs to the universal ribosomal protein uL1 family. Part of the 50S ribosomal subunit.

In terms of biological role, binds directly to 23S rRNA. The L1 stalk is quite mobile in the ribosome, and is involved in E site tRNA release. Functionally, protein L1 is also a translational repressor protein, it controls the translation of the L11 operon by binding to its mRNA. The sequence is that of Large ribosomal subunit protein uL1 from Polynucleobacter asymbioticus (strain DSM 18221 / CIP 109841 / QLW-P1DMWA-1) (Polynucleobacter necessarius subsp. asymbioticus).